A 474-amino-acid chain; its full sequence is tRNA-2-methylthio-N(6)-dimethylallyladenosine synthase (474 aa).

An MTTase N-terminal domain is found at 3–120; that stretch reads QKLHIKTWGC…LPEMINQIRG (118 aa). 6 residues coordinate [4Fe-4S] cluster: C12, C49, C83, C157, C161, and C164. Residues 143-375 form the Radical SAM core domain; it reads RAEGPTAFVS…QERINQQAAQ (233 aa). A TRAM domain is found at 378 to 441; the sequence is RRMLGTEQRV…TNSLRGEVVR (64 aa).

This sequence belongs to the methylthiotransferase family. MiaB subfamily. Monomer. [4Fe-4S] cluster is required as a cofactor.

The protein resides in the cytoplasm. It catalyses the reaction N(6)-dimethylallyladenosine(37) in tRNA + (sulfur carrier)-SH + AH2 + 2 S-adenosyl-L-methionine = 2-methylsulfanyl-N(6)-dimethylallyladenosine(37) in tRNA + (sulfur carrier)-H + 5'-deoxyadenosine + L-methionine + A + S-adenosyl-L-homocysteine + 2 H(+). Catalyzes the methylthiolation of N6-(dimethylallyl)adenosine (i(6)A), leading to the formation of 2-methylthio-N6-(dimethylallyl)adenosine (ms(2)i(6)A) at position 37 in tRNAs that read codons beginning with uridine. The polypeptide is tRNA-2-methylthio-N(6)-dimethylallyladenosine synthase (Haemophilus influenzae (strain PittGG)).